Here is a 441-residue protein sequence, read N- to C-terminus: Transcriptional regulatory protein ZraR (441 aa).

The Response regulatory domain occupies Asp-7–Leu-121. Asp-56 carries the post-translational modification 4-aspartylphosphate. In terms of domain architecture, Sigma-54 factor interaction spans Met-141–Val-370. Gly-172, Thr-173, Arg-329, and Arg-359 together coordinate ATP. The segment at residues Lys-421 to Ser-440 is a DNA-binding region (H-T-H motif).

In terms of processing, phosphorylated by ZraS.

It is found in the cytoplasm. Its activity is regulated as follows. Activity of the ZraS/ZraR two-component system is repressed by the zinc-bound form of ZraP, which probably interacts with the periplasmic region of ZraS. Its function is as follows. Part of the Zra signaling pathway, an envelope stress response (ESR) system composed of the periplasmic accessory protein ZraP, the histidine kinase ZraS and the transcriptional regulator ZraR. The ZraPSR system contributes to antibiotic resistance and is important for membrane integrity in the presence of membrane-targeting biocides. ZraR is a member of the two-component regulatory system ZraS/ZraR. When activated by ZraS, acts in conjunction with sigma-54 to regulate the expression of zraP in the presence of high Zn(2+) or Pb(2+) concentrations. Also positively autoregulates the expression of the zraSR operon. In Salmonella typhi, this protein is Transcriptional regulatory protein ZraR (zraR).